The sequence spans 524 residues: Pentatricopeptide repeat-containing protein At1g02150 (524 aa).

PPR repeat units lie at residues 168–202 (DRRVYGSLLNAYVRAKSREKAEALLNTMRDKGYAL), 203–237 (HPLPFNVMMTLYMNLREYDKVDAMVFEMKQKDIRL), 238–268 (DIYSYNIWLSSCGSLGSVEKMELVYQQMKSD), 274–304 (NWTTFSTMATMYIKMGETEKAEDALRKVEAR), 309–339 (NRIPYHYLLSLYGSLGNKKELYRVWHVYKSV), 344–378 (PNLGYHALVSSLVRMGDIEGAEKVYEEWLPVKSSY), and 379–413 (DPRIPNLLMNAYVKNDQLETAEGLFDHMVEMGGKP).

It belongs to the PPR family. P subfamily.

The protein is Pentatricopeptide repeat-containing protein At1g02150 of Arabidopsis thaliana (Mouse-ear cress).